The chain runs to 187 residues: Putative protein SSX8 (187 aa).

Disordered stretches follow at residues 1–21 (MNGDDAFAKRPRDDDKASEKR) and 109–187 (PKIM…EDDE). One can recognise a KRAB-related domain in the interval 20-83 (KRSKAFNDIA…KQATDFQGNY (64 aa)). Ser-123 carries the phosphoserine modification. A compositionally biased stretch (basic residues) spans 152-168 (KRSGPKRGRHAWTHRLR).

It belongs to the SSX family. As to expression, not detected in any normal or tumor tissues.

In terms of biological role, could act as a modulator of transcription. The protein is Putative protein SSX8 of Homo sapiens (Human).